Here is a 139-residue protein sequence, read N- to C-terminus: Putative pre-16S rRNA nuclease (139 aa).

Belongs to the YqgF nuclease family.

It localises to the cytoplasm. Its function is as follows. Could be a nuclease involved in processing of the 5'-end of pre-16S rRNA. This chain is Putative pre-16S rRNA nuclease, found in Legionella pneumophila (strain Paris).